Here is a 160-residue protein sequence, read N- to C-terminus: Phosphoribosyl-ATP pyrophosphatase (160 aa).

Belongs to the PRA-PH family.

The protein resides in the cytoplasm. It catalyses the reaction 1-(5-phospho-beta-D-ribosyl)-ATP + H2O = 1-(5-phospho-beta-D-ribosyl)-5'-AMP + diphosphate + H(+). It participates in amino-acid biosynthesis; L-histidine biosynthesis; L-histidine from 5-phospho-alpha-D-ribose 1-diphosphate: step 2/9. This is Phosphoribosyl-ATP pyrophosphatase from Granulibacter bethesdensis (strain ATCC BAA-1260 / CGDNIH1).